A 39-amino-acid polypeptide reads, in one-letter code: Histone H2A (39 aa).

Residues 1–18 (AGRGKQGGKVRAKAKTRS) show a composition bias toward basic residues. The interval 1-24 (AGRGKQGGKVRAKAKTRSSRAGLQ) is disordered. Position 5 is an N6-(2-hydroxyisobutyryl)lysine (Lys-5). Lys-5 is subject to N6-acetyllysine. Lys-9 carries the N6-(2-hydroxyisobutyryl)lysine; alternate modification. Lys-9 is modified (N6-lactoyllysine; alternate). At Lys-9 the chain carries N6-succinyllysine. Glycyl lysine isopeptide (Lys-Gly) (interchain with G-Cter in ubiquitin) cross-links involve residues Lys-13 and Lys-15. At Lys-36 the chain carries N6-(2-hydroxyisobutyryl)lysine; alternate.

Belongs to the histone H2A family. The nucleosome is a histone octamer containing two molecules each of H2A, H2B, H3 and H4 assembled in one H3-H4 heterotetramer and two H2A-H2B heterodimers. The octamer wraps approximately 147 bp of DNA. Monoubiquitination of C-terminus gives a specific tag for epigenetic transcriptional repression. Following DNA double-strand breaks (DSBs), it is ubiquitinated through 'Lys-63' linkage of ubiquitin moieties.

Its subcellular location is the nucleus. The protein resides in the chromosome. Functionally, core component of nucleosome. Nucleosomes wrap and compact DNA into chromatin, limiting DNA accessibility to the cellular machineries which require DNA as a template. Histones thereby play a central role in transcription regulation, DNA repair, DNA replication and chromosomal stability. DNA accessibility is regulated via a complex set of post-translational modifications of histones, also called histone code, and nucleosome remodeling. Its function is as follows. Buforins are strong antimicrobial activities in vitro against a broad-spectrum of microorganisms including fungi. Buforin II is more potent than buforin I. In Bufo gargarizans (Asian toad), this protein is Histone H2A.